The primary structure comprises 97 residues: Protein RnfH (97 aa).

This sequence belongs to the UPF0125 (RnfH) family.

The chain is Protein RnfH from Aliivibrio salmonicida (strain LFI1238) (Vibrio salmonicida (strain LFI1238)).